A 128-amino-acid polypeptide reads, in one-letter code: Large ribosomal subunit protein eL22 (128 aa).

Thr-62 is modified (phosphothreonine). Ser-66 is modified (phosphoserine). Lys-69 carries the post-translational modification N6-succinyllysine.

The protein belongs to the eukaryotic ribosomal protein eL22 family. As to quaternary structure, component of the large ribosomal subunit.

It is found in the cytoplasm. Its function is as follows. Component of the large ribosomal subunit. The ribosome is a large ribonucleoprotein complex responsible for the synthesis of proteins in the cell. This Oryctolagus cuniculus (Rabbit) protein is Large ribosomal subunit protein eL22 (RPL22).